A 20-amino-acid polypeptide reads, in one-letter code: Hemocyanin subunit Ib (20 aa).

Positions 1 to 20 are disordered; the sequence is DSVGSTTAHKQQNINHLLDK.

Belongs to the tyrosinase family. Hemocyanin subfamily. As to quaternary structure, composed of 3 major subunits (IB, II and III) and 1 minor subunit (IA) which form homohexamers and heterohexamers. May also form larger structures. Hemolymph.

It is found in the secreted. The protein resides in the extracellular space. In terms of biological role, hemocyanins are copper-containing oxygen carriers occurring freely dissolved in the hemolymph of many mollusks and arthropods. The polypeptide is Hemocyanin subunit Ib (Panulirus japonicus (Japanese spiny lobster)).